Here is a 350-residue protein sequence, read N- to C-terminus: Phosphoribosylformylglycinamidine cyclo-ligase (350 aa).

It belongs to the AIR synthase family.

Its subcellular location is the cytoplasm. It catalyses the reaction 2-formamido-N(1)-(5-O-phospho-beta-D-ribosyl)acetamidine + ATP = 5-amino-1-(5-phospho-beta-D-ribosyl)imidazole + ADP + phosphate + H(+). The protein operates within purine metabolism; IMP biosynthesis via de novo pathway; 5-amino-1-(5-phospho-D-ribosyl)imidazole from N(2)-formyl-N(1)-(5-phospho-D-ribosyl)glycinamide: step 2/2. The protein is Phosphoribosylformylglycinamidine cyclo-ligase of Syntrophotalea carbinolica (strain DSM 2380 / NBRC 103641 / GraBd1) (Pelobacter carbinolicus).